A 106-amino-acid polypeptide reads, in one-letter code: MADLISYDDAIDAAYDIFLEMAPDNLEPVDVILFTAQFDDRGAAELVDISDDWAGHVGFDVDKEIYAEVRIGLVNEENDVLDDVFARMLISRDPDQKFCHILWKRD.

This sequence belongs to the putative dsDNA mimic protein family.

Its function is as follows. May act as a double-stranded DNA (dsDNA) mimic. Probably regulates the activity of a dsDNA-binding protein. The chain is Putative double-stranded DNA mimic protein VV1_3059 from Vibrio vulnificus (strain CMCP6).